Reading from the N-terminus, the 325-residue chain is Short chain isoprenyl diphosphate synthase (325 aa).

Residues Lys-44, Arg-47, and His-76 each contribute to the isopentenyl diphosphate site. Mg(2+) is bound by residues Asp-83 and Asp-87. Arg-92 provides a ligand contact to an all-trans-polyprenyl diphosphate. Arg-93 contacts isopentenyl diphosphate. The an all-trans-polyprenyl diphosphate site is built by Lys-173, Thr-174, Gln-211, Lys-228, and Lys-238.

The protein belongs to the FPP/GGPP synthase family. As to quaternary structure, homodimer. It depends on Mg(2+) as a cofactor.

Its subcellular location is the cytoplasm. The protein is Short chain isoprenyl diphosphate synthase (idsA) of Methanothermobacter thermautotrophicus (strain ATCC 29096 / DSM 1053 / JCM 10044 / NBRC 100330 / Delta H) (Methanobacterium thermoautotrophicum).